The following is a 509-amino-acid chain: MDSASLAVVVWAILLVLWLRRIFGQRSSLPLPPAPPGYPVIGNLLDLANNDVHIRARHWSRNFDDDVISLKVLGKTMIILNSPTAVSDLFDKRASNYSDRPDMPMIVDFIGWDWTFALMRYGPRWKEHRRVFNNHFNIGTSGASEDRHIQLRICRELLSLMFQSPSKYLENLRHYTGHIILKRTYGHTVVDEEDPYIRLVEAASQSTSEAAVPGAFLVDLFPSMKYIPEWFPGAQFKRKAREWRKLSEAMINAPYDMAKGKFDEGNAEACFVSACLEQNKTASGQGLSEELIKDTAAVAYAAGADTSVSTLTTFILAMTLYPDVQKAAQAELDALLGGERLPDFGDKTRLPYVTAILKEVLRWIPVLPMAVPHRAVNADTYKGYYIPAGAFVYGNAWAILHNPDIFADPETFRPDRFIENPTLLNPIDNGVFGFGRRACAGRVMALDTMWIAMASILAVFDISKAVDERGNEITPPVKLSPGTISHPAPFPCIIKPRSKAALELITQDD.

Residues 4-24 (ASLAVVVWAILLVLWLRRIFG) form a helical membrane-spanning segment. Residues N96 and N279 are each glycosylated (N-linked (GlcNAc...) asparagine). C439 contacts heme.

Belongs to the cytochrome P450 family. Requires heme as cofactor.

The protein localises to the membrane. It participates in secondary metabolite biosynthesis. Functionally, cytochrome P450 monooxygenase, part of the gene cluster that mediates the biosynthesis of melleolides, a range of antifungal and phytotoxic polyketide derivatives composed of an orsellinic acid (OA) moiety esterified to various sesquiterpene alcohols. The first step in melleolides biosynthesis is performed by the delta(6)-protoilludene synthase PRO1 which catalyzes the cyclization of farnesyl diphosphate to protoilludene. The orsellinic acid synthase armB produces OA by condensing acetyl-CoA with 3 malonyl-CoA units in a three-round chain elongation reaction folowed by a C2-C7 ring closure. ArmB further catalyzes the trans-esterification of OA to the various sesquiterpene alcohols resulting from the hydroxylation of protoilludene. The melleolides cluster also includes 5 cytochrome P450 monooxygenases, 4 NAD(+)-dependent oxidoreductases, one flavin-dependent oxidoreductase, and one O-methyltransferase. The cytochrome P450 monooxygenases may be involved in protoilludene hydroxylation to elaborate melleolides with multiple alcohol groups, such as melleolide D, which carries alcohol functionalities at C-4, C-5, C-10, and C-13. The role of the NAD(+)-dependent enzymes remains unknown. Numerous melleolides, including arnamial, show 5'-O-methylation of the aromatic moiety which may be catalyzed by the methyltransferase encoded in the cluster. The flavin-dependent oxidoreductase might represent the dehydrogenase yielding the aldehyde in position 1 of arnamial and other melleolides. Finally, several halogenase localized outside of the cluster, are able to catalyze the transfer of a single chlorine atom to the melleolide backbone, resulting in a 6'-chloromelleolide product. This chain is Cytochrome P450 monooxygenase ARMGADRAFT_974139, found in Armillaria gallica (Bulbous honey fungus).